Consider the following 736-residue polypeptide: Protein kinase C epsilon type (736 aa).

The C2 domain occupies 1 to 117 (MVVFNGLLKI…NGSRHFEDWI (117 aa)). At Ser62 the chain carries Phosphoserine. The Phorbol-ester/DAG-type 1 zinc-finger motif lies at 169 to 220 (GHKFMATYLRQPTYCSHCRDFIWGVIGKQGYQCQVCTCVVHKRCHELIITKV). Thr228 is subject to Phosphothreonine. Ser234 is subject to Phosphoserine. The Phorbol-ester/DAG-type 2 zinc-finger motif lies at 242–292 (PHKFGIHNYKVPTFCDHCGSLLWGLLRQGLQCKVCKMNVHRRCETNVAPNC). At Thr309 the chain carries Phosphothreonine. The segment at 310 to 356 (PDKITNSGQRRKKLIGGAESPQPTSGSSPSEEDRSKSAPTSPCDQEL) is disordered. Residues Ser316, Ser329, and Ser337 each carry the phosphoserine modification. Ser346 carries the post-translational modification Phosphoserine; by GSK3-beta. Position 349 is a phosphothreonine (Thr349). Ser350 carries the post-translational modification Phosphoserine; by MAPK11 and MAPK14. Residue Ser368 is modified to Phosphoserine; by autocatalysis. Residues 369–397 (FDNRGEEHRAASSTDGQLGSPENGEVRQG) form a disordered region. Ser388 is modified (phosphoserine). Residues 407–667 (FNFIKVLGKG…EDAIKQHPFF (261 aa)) enclose the Protein kinase domain. ATP is bound by residues 413 to 421 (LGKGSFGKV) and Lys436. Asp531 functions as the Proton acceptor in the catalytic mechanism. Residue Thr565 is modified to Phosphothreonine; by PDPK1. An AGC-kinase C-terminal domain is found at 668 to 736 (KEIDWVLLEQ…FSYFGEDLMP (69 aa)). Position 702 is a phosphothreonine (Thr702). Position 709 is a phosphothreonine; by autocatalysis (Thr709). Ser728 is modified (phosphoserine; by autocatalysis).

This sequence belongs to the protein kinase superfamily. AGC Ser/Thr protein kinase family. PKC subfamily. Forms a ternary complex with TRIM63 and RACK1/GN2BL1. Can form a complex with PDLIM5 and N-type calcium channel. Interacts with COPB1. Interacts with DGKQ. Interacts with STAT3. Interacts with YWHAB. Interacts with HSP90AB1; promotes functional activation in a heat shock-dependent manner. Interacts (via phorbol-ester/DAG-type 2 domain) with PRPH and VIM. Interacts with NLRP5/MATER. Phosphorylation on Thr-565 by PDPK1 triggers autophosphorylation on Ser-728. Phosphorylation in the hinge domain at Ser-350 by MAPK11 or MAPK14, Ser-346 by GSK3B and Ser-368 by autophosphorylation is required for interaction with YWHAB. In response to growth factors, phosphorylated at Thr-702 and Ser-728 by the mTORC2 complex, promoting autophosphorylation and activation of PRKCE.

The protein resides in the cytoplasm. It localises to the cytoskeleton. It is found in the cell membrane. Its subcellular location is the perinuclear region. The protein localises to the nucleus. The catalysed reaction is L-seryl-[protein] + ATP = O-phospho-L-seryl-[protein] + ADP + H(+). It catalyses the reaction L-threonyl-[protein] + ATP = O-phospho-L-threonyl-[protein] + ADP + H(+). Its activity is regulated as follows. Novel PKCs (PRKCD, PRKCE, PRKCH and PRKCQ) are calcium-insensitive, but activated by diacylglycerol (DAG) and phosphatidylserine. Three specific sites; Thr-565 (activation loop of the kinase domain), Thr-709 (turn motif) and Ser-728 (hydrophobic region), need to be phosphorylated for its full activation. Functionally, calcium-independent, phospholipid- and diacylglycerol (DAG)-dependent serine/threonine-protein kinase that plays essential roles in the regulation of multiple cellular processes linked to cytoskeletal proteins, such as cell adhesion, motility, migration and cell cycle, functions in neuron growth and ion channel regulation, and is involved in immune response, cancer cell invasion and regulation of apoptosis. Mediates cell adhesion to the extracellular matrix via integrin-dependent signaling, by mediating angiotensin-2-induced activation of integrin beta-1 (ITGB1) in cardiac fibroblasts. Phosphorylates MARCKS, which phosphorylates and activates PTK2/FAK, leading to the spread of cardiomyocytes. Involved in the control of the directional transport of ITGB1 in mesenchymal cells by phosphorylating vimentin (VIM), an intermediate filament (IF) protein. In epithelial cells, associates with and phosphorylates keratin-8 (KRT8), which induces targeting of desmoplakin at desmosomes and regulates cell-cell contact. Phosphorylates IQGAP1, which binds to CDC42, mediating epithelial cell-cell detachment prior to migration. During cytokinesis, forms a complex with YWHAB, which is crucial for daughter cell separation, and facilitates abscission by a mechanism which may implicate the regulation of RHOA. In cardiac myocytes, regulates myofilament function and excitation coupling at the Z-lines, where it is indirectly associated with F-actin via interaction with COPB1. During endothelin-induced cardiomyocyte hypertrophy, mediates activation of PTK2/FAK, which is critical for cardiomyocyte survival and regulation of sarcomere length. Plays a role in the pathogenesis of dilated cardiomyopathy via persistent phosphorylation of troponin I (TNNI3). Involved in nerve growth factor (NFG)-induced neurite outgrowth and neuron morphological change independently of its kinase activity, by inhibition of RHOA pathway, activation of CDC42 and cytoskeletal rearrangement. May be involved in presynaptic facilitation by mediating phorbol ester-induced synaptic potentiation. Phosphorylates gamma-aminobutyric acid receptor subunit gamma-2 (GABRG2), which reduces the response of GABA receptors to ethanol and benzodiazepines and may mediate acute tolerance to the intoxicating effects of ethanol. Upon PMA treatment, phosphorylates the capsaicin- and heat-activated cation channel TRPV1, which is required for bradykinin-induced sensitization of the heat response in nociceptive neurons. Is able to form a complex with PDLIM5 and N-type calcium channel, and may enhance channel activities and potentiates fast synaptic transmission by phosphorylating the pore-forming alpha subunit CACNA1B (CaV2.2). Downstream of TLR4, plays an important role in the lipopolysaccharide (LPS)-induced immune response by phosphorylating and activating TICAM2/TRAM, which in turn activates the transcription factor IRF3 and subsequent cytokines production. In differentiating erythroid progenitors, is regulated by EPO and controls the protection against the TNFSF10/TRAIL-mediated apoptosis, via BCL2. May be involved in the regulation of the insulin-induced phosphorylation and activation of AKT1. Phosphorylates NLRP5/MATER and may thereby modulate AKT pathway activation in cumulus cells. Phosphorylates and activates LRRK1, which phosphorylates RAB proteins involved in intracellular trafficking. In Oryctolagus cuniculus (Rabbit), this protein is Protein kinase C epsilon type (PRKCE).